Reading from the N-terminus, the 310-residue chain is MNVTDLPNAIFLMGPTASGKTDLAIALCQTLPCDIISVDSALIYRGMDIGTAKPTAQELALAPHKLIDIIDPALSYSAADFCRDALREMNDIVARGRIPLLVGGTMLYFKALLEGLSPLPSADPAIRAELEEEAARLGWQALHDELVRIDPVAGARIHPNDPQRLSRALEVYRISGKTLTELTQVQGEGLPYRVHQFAIAPSDRALLHKRIEQRFDKMLQSGFEQEVRALYERGDLTPHLPAIRCVGYRQMWDYLAGEVEYDEMRYRGIVATRQLAKRQMTWLRGWPEVTWLESGESGNLARVVARAGVA.

Gly-14–Thr-21 is an ATP binding site. A substrate-binding site is contributed by Thr-16 to Thr-21. 3 interaction with substrate tRNA regions span residues Asp-39–Leu-42, Gln-163–Arg-167, and Arg-244–Arg-249.

It belongs to the IPP transferase family. In terms of assembly, monomer. Requires Mg(2+) as cofactor.

The enzyme catalyses adenosine(37) in tRNA + dimethylallyl diphosphate = N(6)-dimethylallyladenosine(37) in tRNA + diphosphate. Catalyzes the transfer of a dimethylallyl group onto the adenine at position 37 in tRNAs that read codons beginning with uridine, leading to the formation of N6-(dimethylallyl)adenosine (i(6)A). The chain is tRNA dimethylallyltransferase from Aeromonas salmonicida (strain A449).